We begin with the raw amino-acid sequence, 823 residues long: Adhesion G protein-coupled receptor E2 (823 aa).

Positions 1–23 are cleaved as a signal peptide; sequence MGGRVFLVFLAFCVWLTLPGAET. Topologically, residues 24-540 are extracellular; the sequence is QDSRGCARWC…EEDPVLTVIT (517 aa). Positions 25-66 constitute an EGF-like 1 domain; it reads DSRGCARWCPQDSSCVNATACRCNPGFSSFSEIITTPMETCD. Disulfide bonds link cysteine 29-cysteine 39, cysteine 33-cysteine 45, cysteine 47-cysteine 65, cysteine 71-cysteine 85, cysteine 79-cysteine 94, cysteine 96-cysteine 117, cysteine 123-cysteine 136, cysteine 130-cysteine 145, cysteine 147-cysteine 161, cysteine 167-cysteine 180, cysteine 174-cysteine 189, cysteine 191-cysteine 210, cysteine 216-cysteine 229, cysteine 223-cysteine 238, and cysteine 240-cysteine 259. Asparagine 41 carries an N-linked (GlcNAc...) asparagine glycan. An EGF-like 2; calcium-binding domain is found at 67–118; the sequence is DINECATLSKVSCGKFSDCWNTEGSYDCVCSPGYEPVSGAKTFKNESENTCQ. Asparagine 111 is a glycosylation site (N-linked (GlcNAc...) asparagine). The region spanning 119 to 162 is the EGF-like 3; calcium-binding domain; the sequence is DVDECQQNPRLCKSYGTCVNTLGSYTCQCLPGFKLKPEDPKLCT. Residues 163–211 form the EGF-like 4; calcium-binding domain; the sequence is DVNECTSGQNPCHSSTHCLNNVGSYQCRCRPGWQPIPGSPNGPNNTVCE. Asparagine 206 carries an N-linked (GlcNAc...) asparagine glycan. Residues 212–260 enclose the EGF-like 5; calcium-binding domain; the sequence is DVDECSSGQHQCDSSTVCFNTVGSYSCRCRPGWKPRHGIPNNQKDTVCE. N-linked (GlcNAc...) asparagine glycosylation is found at asparagine 298, asparagine 347, asparagine 354, asparagine 456, and asparagine 460. The GAIN-B domain occupies 354–530; the sequence is NFSYPAGTEL…AVLMAHYDVQ (177 aa). Cystine bridges form between cysteine 482/cysteine 512 and cysteine 500/cysteine 514. Positions 482-530 are GPS; sequence CVFWEHGQNGCGHWATTGCSTIGTRDTSTICRCTHLSSFAVLMAHYDVQ. The helical transmembrane segment at 541 to 561 threads the bilayer; the sequence is YMGLSVSLLCLLLAALTFLLC. The Cytoplasmic segment spans residues 562 to 569; that stretch reads KAIQNTST. Residues 570-590 traverse the membrane as a helical segment; the sequence is SLHLQLSLCLFLAHLLFLVAI. Residues 591 to 605 lie on the Extracellular side of the membrane; it reads DQTGHKVLCSIIAGT. Residues 606-626 form a helical membrane-spanning segment; that stretch reads LHYLYLATLTWMLLEALYLFL. Topologically, residues 627 to 644 are cytoplasmic; sequence TARNLTVVNYSSINRFMK. A helical membrane pass occupies residues 645–665; it reads KLMFPVGYGVPAVTVAISAAS. At 666–683 the chain is on the extracellular side; the sequence is RPHLYGTPSRCWLQPEKG. The helical transmembrane segment at 684 to 704 threads the bilayer; that stretch reads FIWGFLGPVCAIFSVNLVLFL. Residues 705-735 are Cytoplasmic-facing; that stretch reads VTLWILKNRLSSLNSEVSTLRNTRMLAFKAT. Residues 736 to 756 form a helical membrane-spanning segment; that stretch reads AQLFILGCTWCLGILQVGPAA. Over 757 to 760 the chain is Extracellular; sequence RVMA. A helical transmembrane segment spans residues 761 to 781; sequence YLFTIINSLQGVFIFLVYCLL. At 782–823 the chain is on the cytoplasmic side; that stretch reads SQQVREQYGKWSKGIRKLKTESEMHTLSSSAKADTSKPSTVN.

It belongs to the G-protein coupled receptor 2 family. Adhesion G-protein coupled receptor (ADGR) subfamily. Forms a heterodimer, consisting of a large extracellular region non-covalently linked to a seven-transmembrane moiety. Interacts with chondroitin sulfate; the interaction with chondroitin sulfate is calcium-dependent. Interacts with CD55. Post-translationally, autoproteolytically cleaved into 2 subunits, an extracellular alpha subunit and a seven-transmembrane beta subunit. In terms of tissue distribution, expression is restricted to myeloid cells. Highest expression was found in peripheral blood leukocytes, followed by spleen and lymph nodes, with intermediate to low levels in thymus, bone marrow, fetal liver, placenta, and lung, and no expression in heart, brain, skeletal muscle, kidney, or pancreas. Expression is also detected in monocyte/macrophage and Jurkat cell lines but not in other cell lines tested. High expression in mast cells.

It localises to the cell membrane. Its subcellular location is the cell projection. The protein localises to the ruffle membrane. Its function is as follows. Cell surface receptor that binds to the chondroitin sulfate moiety of glycosaminoglycan chains and promotes cell attachment. Promotes granulocyte chemotaxis, degranulation and adhesion. In macrophages, promotes the release of inflammatory cytokines, including IL8 and TNF. Signals probably through G-proteins. Is a regulator of mast cell degranulation. This is Adhesion G protein-coupled receptor E2 from Homo sapiens (Human).